A 192-amino-acid polypeptide reads, in one-letter code: Phosphoheptose isomerase (192 aa).

One can recognise an SIS domain in the interval 37–192 (IAASLRDGGK…IMLIEKELAV (156 aa)). 52–54 (NGG) lines the substrate pocket. Histidine 61 and glutamate 65 together coordinate Zn(2+). Substrate contacts are provided by residues glutamate 65, 93–94 (ND), 119–121 (STS), serine 124, and glutamine 172. Glutamine 172 and histidine 180 together coordinate Zn(2+).

It belongs to the SIS family. GmhA subfamily. In terms of assembly, homotetramer. The cofactor is Zn(2+).

It is found in the cytoplasm. It catalyses the reaction 2 D-sedoheptulose 7-phosphate = D-glycero-alpha-D-manno-heptose 7-phosphate + D-glycero-beta-D-manno-heptose 7-phosphate. It functions in the pathway carbohydrate biosynthesis; D-glycero-D-manno-heptose 7-phosphate biosynthesis; D-glycero-alpha-D-manno-heptose 7-phosphate and D-glycero-beta-D-manno-heptose 7-phosphate from sedoheptulose 7-phosphate: step 1/1. Catalyzes the isomerization of sedoheptulose 7-phosphate in D-glycero-D-manno-heptose 7-phosphate. The polypeptide is Phosphoheptose isomerase (Tolumonas auensis (strain DSM 9187 / NBRC 110442 / TA 4)).